The following is a 301-amino-acid chain: uncharacterized protein (301 aa).

The FHA domain maps to 27–85 (YKIGRHTNKSTSPSPSNLFFNSKVLSRQHAELWLDKDTLSVYIRDVKSSNGTFVNETRL). Residues 187–236 (TGKTRDNRNNHHYSRKSSPHISSLAVPSTKHLDGERDRNLKRSTSPLSSS) are disordered. S204 is modified (phosphoserine). Residues 216-226 (KHLDGERDRNL) are compositionally biased toward basic and acidic residues. Position 231 is a phosphoserine (S231).

In terms of assembly, interacts with sad1.

Its subcellular location is the nucleus. This is an uncharacterized protein from Schizosaccharomyces pombe (strain 972 / ATCC 24843) (Fission yeast).